A 314-amino-acid chain; its full sequence is Methionyl-tRNA formyltransferase (314 aa).

110–113 is a binding site for (6S)-5,6,7,8-tetrahydrofolate; that stretch reads SLLP.

Belongs to the Fmt family.

The enzyme catalyses L-methionyl-tRNA(fMet) + (6R)-10-formyltetrahydrofolate = N-formyl-L-methionyl-tRNA(fMet) + (6S)-5,6,7,8-tetrahydrofolate + H(+). Attaches a formyl group to the free amino group of methionyl-tRNA(fMet). The formyl group appears to play a dual role in the initiator identity of N-formylmethionyl-tRNA by promoting its recognition by IF2 and preventing the misappropriation of this tRNA by the elongation apparatus. The sequence is that of Methionyl-tRNA formyltransferase from Dichelobacter nodosus (strain VCS1703A).